The chain runs to 200 residues: 3-isopropylmalate dehydratase small subunit (200 aa).

Belongs to the LeuD family. LeuD type 1 subfamily. As to quaternary structure, heterodimer of LeuC and LeuD.

It carries out the reaction (2R,3S)-3-isopropylmalate = (2S)-2-isopropylmalate. Its pathway is amino-acid biosynthesis; L-leucine biosynthesis; L-leucine from 3-methyl-2-oxobutanoate: step 2/4. Functionally, catalyzes the isomerization between 2-isopropylmalate and 3-isopropylmalate, via the formation of 2-isopropylmaleate. The polypeptide is 3-isopropylmalate dehydratase small subunit (Haemophilus influenzae (strain PittEE)).